Here is a 550-residue protein sequence, read N- to C-terminus: Carboxypeptidase Y homolog A (550 aa).

Positions 1–18 are cleaved as a signal peptide; sequence MKSLVLGLLVGSAIASGP. Positions 19 to 131 are excised as a propeptide; it reads LQHVLHAPPE…KLAQYDLRIR (113 aa). Cystine bridges form between C185/C424, C319/C333, C343/C366, C350/C359, and C388/C394. N216 is a glycosylation site (N-linked (GlcNAc...) asparagine). S272 is an active-site residue. The active site involves D463. N-linked (GlcNAc...) asparagine glycosylation is found at N493 and N514. H525 is an active-site residue.

This sequence belongs to the peptidase S10 family.

It localises to the vacuole. The enzyme catalyses Release of a C-terminal amino acid with broad specificity.. In terms of biological role, vacuolar carboxypeptidase involved in degradation of small peptides. Digests preferentially peptides containing an aliphatic or hydrophobic residue in P1' position, as well as methionine, leucine or phenylalanine in P1 position of ester substrate. In Paracoccidioides lutzii (strain ATCC MYA-826 / Pb01) (Paracoccidioides brasiliensis), this protein is Carboxypeptidase Y homolog A (CPYA).